The primary structure comprises 102 residues: NADH-quinone oxidoreductase subunit K (102 aa).

3 helical membrane-spanning segments follow: residues 6-26 (ATHFLLLSAALFIIGMVGVLT), 31-51 (LVIFMCIELMLNAVNVSLIGF), and 62-82 (VFALFVIAIAAAEAVVGLGIV).

The protein belongs to the complex I subunit 4L family. In terms of assembly, NDH-1 is composed of 14 different subunits. Subunits NuoA, H, J, K, L, M, N constitute the membrane sector of the complex.

The protein resides in the cell membrane. It carries out the reaction a quinone + NADH + 5 H(+)(in) = a quinol + NAD(+) + 4 H(+)(out). NDH-1 shuttles electrons from NADH, via FMN and iron-sulfur (Fe-S) centers, to quinones in the respiratory chain. The immediate electron acceptor for the enzyme in this species is believed to be ubiquinone. Couples the redox reaction to proton translocation (for every two electrons transferred, four hydrogen ions are translocated across the cytoplasmic membrane), and thus conserves the redox energy in a proton gradient. This chain is NADH-quinone oxidoreductase subunit K, found in Thermomicrobium roseum (strain ATCC 27502 / DSM 5159 / P-2).